A 286-amino-acid chain; its full sequence is Deleted in azoospermia-like-B (286 aa).

The RRM domain occupies 33 to 114; that stretch reads NTVFVGGIDI…PAIRKICTYV (82 aa). The region spanning 155-180 is the DAZ domain; the sequence is ACPYPSSPPMAIQQIPVGCQQPGYFQ.

It belongs to the RRM DAZ family. As to quaternary structure, interacts with the C-terminus of pabp1 and with epabp. Prior to oocyte maturation, found in a complex with epabp and pum2 proteins and spdy1 mRNA; pum2 dissociates from the complex during maturation.

It is found in the cytoplasm. Functionally, RNA-binding protein that is required for primordial germ cell (PGC) differentiation and indirectly necessary for the migration of PGCs through the endoderm. May promote meiotic cell division during spermatogenesis. Shows a preference for G- and U-rich RNAs and probably binds the 3'-UTR of target mRNAs. Stimulates the initiation of translation of mRNAs through the recruitment of poly(A)-binding proteins (PABPs). This Xenopus laevis (African clawed frog) protein is Deleted in azoospermia-like-B (dazl-b).